A 119-amino-acid chain; its full sequence is MSNIIKQIEDEQLKQDLPTFAPGDTVVVQVKVKEGDRERLQAFEGVVIAKRNRGLHSAFTVRKISNGEGVERAFQTHSPVVDSITVKRRGLVRRAKLYYLRERSGKSARIKEKLVRKSS.

It belongs to the bacterial ribosomal protein bL19 family.

Its function is as follows. This protein is located at the 30S-50S ribosomal subunit interface and may play a role in the structure and function of the aminoacyl-tRNA binding site. This is Large ribosomal subunit protein bL19 from Photobacterium profundum (strain SS9).